The following is a 332-amino-acid chain: Phosphate acyltransferase (332 aa).

Belongs to the PlsX family. Homodimer. Probably interacts with PlsY.

Its subcellular location is the cytoplasm. The catalysed reaction is a fatty acyl-[ACP] + phosphate = an acyl phosphate + holo-[ACP]. It participates in lipid metabolism; phospholipid metabolism. Catalyzes the reversible formation of acyl-phosphate (acyl-PO(4)) from acyl-[acyl-carrier-protein] (acyl-ACP). This enzyme utilizes acyl-ACP as fatty acyl donor, but not acyl-CoA. This is Phosphate acyltransferase from Streptococcus sanguinis (strain SK36).